A 95-amino-acid chain; its full sequence is UPF0235 protein Ssed_1229 (95 aa).

This sequence belongs to the UPF0235 family.

This Shewanella sediminis (strain HAW-EB3) protein is UPF0235 protein Ssed_1229.